We begin with the raw amino-acid sequence, 819 residues long: DNA topoisomerase 4 subunit A (819 aa).

In terms of domain architecture, Topo IIA-type catalytic spans 30–496; it reads LPDIRDGLKP…QIIEIDTASL (467 aa). Y118 (O-(5'-phospho-DNA)-tyrosine intermediate) is an active-site residue.

Belongs to the type II topoisomerase GyrA/ParC subunit family. ParC type 2 subfamily. Heterotetramer composed of ParC and ParE.

Its subcellular location is the cell membrane. It carries out the reaction ATP-dependent breakage, passage and rejoining of double-stranded DNA.. Functionally, topoisomerase IV is essential for chromosome segregation. It relaxes supercoiled DNA. Performs the decatenation events required during the replication of a circular DNA molecule. The chain is DNA topoisomerase 4 subunit A from Streptococcus pyogenes serotype M18 (strain MGAS8232).